Here is a 151-residue protein sequence, read N- to C-terminus: Transcriptional repressor NrdR (151 aa).

A zinc finger spans residues 3–34 (CPYCAYGESKVVDSRSTEDGSSIRRRRECLKC). The ATP-cone domain maps to 49–139 (ILVIKKNMSR…VYRQFKDINT (91 aa)).

The protein belongs to the NrdR family. Zn(2+) serves as cofactor.

In terms of biological role, negatively regulates transcription of bacterial ribonucleotide reductase nrd genes and operons by binding to NrdR-boxes. The chain is Transcriptional repressor NrdR from Clostridium botulinum (strain ATCC 19397 / Type A).